The chain runs to 178 residues: Large ribosomal subunit protein uL6 (178 aa).

The protein belongs to the universal ribosomal protein uL6 family. Part of the 50S ribosomal subunit.

In terms of biological role, this protein binds to the 23S rRNA, and is important in its secondary structure. It is located near the subunit interface in the base of the L7/L12 stalk, and near the tRNA binding site of the peptidyltransferase center. In Campylobacter curvus (strain 525.92), this protein is Large ribosomal subunit protein uL6.